The chain runs to 229 residues: Enolase-phosphatase E1 (229 aa).

Residues 208 to 218 (DTQSTHRQVSS) are compositionally biased toward polar residues. The disordered stretch occupies residues 208–229 (DTQSTHRQVSSFDDIHPEQIPT). Residues 220–229 (DDIHPEQIPT) show a composition bias toward basic and acidic residues.

Belongs to the HAD-like hydrolase superfamily. MasA/MtnC family. Monomer. Mg(2+) is required as a cofactor.

It catalyses the reaction 5-methylsulfanyl-2,3-dioxopentyl phosphate + H2O = 1,2-dihydroxy-5-(methylsulfanyl)pent-1-en-3-one + phosphate. It participates in amino-acid biosynthesis; L-methionine biosynthesis via salvage pathway; L-methionine from S-methyl-5-thio-alpha-D-ribose 1-phosphate: step 3/6. The protein operates within amino-acid biosynthesis; L-methionine biosynthesis via salvage pathway; L-methionine from S-methyl-5-thio-alpha-D-ribose 1-phosphate: step 4/6. Bifunctional enzyme that catalyzes the enolization of 2,3-diketo-5-methylthiopentyl-1-phosphate (DK-MTP-1-P) into the intermediate 2-hydroxy-3-keto-5-methylthiopentenyl-1-phosphate (HK-MTPenyl-1-P), which is then dephosphorylated to form the acireductone 1,2-dihydroxy-3-keto-5-methylthiopentene (DHK-MTPene). This is Enolase-phosphatase E1 from Cronobacter sakazakii (Enterobacter sakazakii).